Reading from the N-terminus, the 100-residue chain is Class II hydrophobin FOXG_02746 (100 aa).

A signal peptide spans 1–17 (MQFYTIVSLFLAGTAYA). 4 cysteine pairs are disulfide-bonded: Cys-29-Cys-79, Cys-40-Cys-70, Cys-41-Cys-53, and Cys-80-Cys-92.

Belongs to the cerato-ulmin hydrophobin family. Homodimer. Homodimers further self-assemble to form highly ordered films at water-air interfaces through intermolecular interactions.

The protein resides in the secreted. Its subcellular location is the cell wall. Its function is as follows. Aerial growth, conidiation, and dispersal of filamentous fungi in the environment rely upon a capability of their secreting small amphipathic proteins called hydrophobins (HPBs) with low sequence identity. Class I can self-assemble into an outermost layer of rodlet bundles on aerial cell surfaces, conferring cellular hydrophobicity that supports fungal growth, development and dispersal; whereas Class II form highly ordered films at water-air interfaces through intermolecular interactions but contribute nothing to the rodlet structure. FOXG_02746 is a class II hydrophobin that is likely required for plant colonization. The polypeptide is Class II hydrophobin FOXG_02746 (Fusarium oxysporum f. sp. lycopersici (strain 4287 / CBS 123668 / FGSC 9935 / NRRL 34936) (Fusarium vascular wilt of tomato)).